The following is a 204-amino-acid chain: ADP-ribosylation factor-like protein 15 (204 aa).

GTP is bound by residues 39-46 (GLTGSGKT), 82-86 (ELGGA), and 142-145 (NHQD).

Belongs to the small GTPase superfamily. Arf family.

The protein is ADP-ribosylation factor-like protein 15 (ARL15) of Homo sapiens (Human).